A 148-amino-acid polypeptide reads, in one-letter code: SPbeta prophage-derived disulfide bond formation protein B (148 aa).

Residues 7 to 26 (KSFFLLLFFLSFFGTMASLF) form a helical membrane-spanning segment. Residues Cys-36 and Cys-39 are joined by a disulfide bond. Helical transmembrane passes span 41 to 60 (YQRI…LLKK) and 67 to 84 (YVVF…YHYI). The cysteines at positions 95 and 102 are disulfide-linked. The chain crosses the membrane as a helical span at residues 111-135 (GFITLPLMSSVCFALIFGIGLKLII).

Belongs to the DsbB family. BdbC subfamily.

The protein localises to the cell membrane. In terms of biological role, important but not absolutely essential for the production of the lantibiotic sublancin 168, it may also be required for the stability of other secreted proteins. Not required for competence for DNA uptake. This Bacillus subtilis (strain 168) protein is SPbeta prophage-derived disulfide bond formation protein B (bdbB).